A 432-amino-acid polypeptide reads, in one-letter code: Serine--tRNA ligase (432 aa).

L-serine is bound at residue 235–237; the sequence is TSE. 266 to 268 contributes to the ATP binding site; the sequence is RSE. Residue Glu289 participates in L-serine binding. Position 353–356 (353–356) interacts with ATP; sequence EISS. Residue Ser388 coordinates L-serine.

It belongs to the class-II aminoacyl-tRNA synthetase family. Type-1 seryl-tRNA synthetase subfamily. Homodimer. The tRNA molecule binds across the dimer.

Its subcellular location is the cytoplasm. The catalysed reaction is tRNA(Ser) + L-serine + ATP = L-seryl-tRNA(Ser) + AMP + diphosphate + H(+). The enzyme catalyses tRNA(Sec) + L-serine + ATP = L-seryl-tRNA(Sec) + AMP + diphosphate + H(+). It functions in the pathway aminoacyl-tRNA biosynthesis; selenocysteinyl-tRNA(Sec) biosynthesis; L-seryl-tRNA(Sec) from L-serine and tRNA(Sec): step 1/1. Its function is as follows. Catalyzes the attachment of serine to tRNA(Ser). Is also able to aminoacylate tRNA(Sec) with serine, to form the misacylated tRNA L-seryl-tRNA(Sec), which will be further converted into selenocysteinyl-tRNA(Sec). The protein is Serine--tRNA ligase of Paraburkholderia phymatum (strain DSM 17167 / CIP 108236 / LMG 21445 / STM815) (Burkholderia phymatum).